We begin with the raw amino-acid sequence, 93 residues long: UPF0457 protein GTNG_2792 (93 aa).

Belongs to the UPF0457 family.

The chain is UPF0457 protein GTNG_2792 from Geobacillus thermodenitrificans (strain NG80-2).